Here is a 118-residue protein sequence, read N- to C-terminus: Ribonuclease P protein component (118 aa).

This sequence belongs to the RnpA family. Consists of a catalytic RNA component (M1 or rnpB) and a protein subunit.

It catalyses the reaction Endonucleolytic cleavage of RNA, removing 5'-extranucleotides from tRNA precursor.. Its function is as follows. RNaseP catalyzes the removal of the 5'-leader sequence from pre-tRNA to produce the mature 5'-terminus. It can also cleave other RNA substrates such as 4.5S RNA. The protein component plays an auxiliary but essential role in vivo by binding to the 5'-leader sequence and broadening the substrate specificity of the ribozyme. This is Ribonuclease P protein component from Rickettsia felis (strain ATCC VR-1525 / URRWXCal2) (Rickettsia azadi).